A 913-amino-acid polypeptide reads, in one-letter code: MTSRLRALGGRINNTRTSELPKEKTRSEVICSIRFLDGLVQTFKVNKQDLGQSLLDMAYGHLGVTEKEYFGLQHGDDPVDSPRWLEASKPLRKQLKGGFPCTLHFRVRYFIPDPNTLQQEQTRHLYFLQLKMDVCEGRLTCPLNSAVVLASYAVQSHFGDFNSSIHHPGYLADSQFIPDQNDDFLSKVESLHEQHSGLKQSEAESCYINIARTLDFYGVELHGGRDLHNLDLMIGIASAGIAVYRKYICTSFYPWVNILKISFKRKKFFIHQRQKQAESREHIVAFNMLNYRSCKNLWKSCVEHHSFFQAKKLLPQEKNVLSQYWTLGSRNPKKSVNNQYCKKVIGGMVWNPVMRRSLSVERLETKSLPSRSPPITPNWRSPRLRHEIRKPRHSSADNLANEMTYITETEDVFYTYKGPLSPKDSDSEVSQNHSPHRESLSENNPAQSCLTQKSSSSVSPSSNAPGSCSPDGVDQRFLEDYHKVTKGGFVEDASQYYCDKSDDGDGYLVLIRITPDEEGRFGFNLKGGVDQKMPLVVSRINPESPADTCMPKLNEGDQIVLINGRDISEHTHDQVVMFIKASRESHSRELALVIRRKAVRSLAEIRSEDELSQLFPEAMFPACPEGGDSLEGSMELLKKGLESGTVLIQFEQLYRKKPGLAVSFAKLPQNLDKNRYKDVLPYDTTRVLLQGNEDYINASYVNMEMPAANLVNKYIATQGPLPNTCAQFWQVVWDQKLSLVVMLTTLTERGRTKCHQYWPDPPDIMDHGIFHIQCQTEDCTIAYVSREMLVTNTETGEEHTVTHLQYVAWPDHGVPDDSSDFLEFVKYVRSLRVDGEPALVHCSAGIGRTGVLVTMETAMCLIERNLPVYPLDIVRKMRDQRAMMVQTSSQYKFVCEAILRVYEEGLVQRLDPS.

Residues 29–312 (VICSIRFLDG…EHHSFFQAKK (284 aa)) enclose the FERM domain. 3 positions are modified to phosphoserine: Ser-357, Ser-359, and Ser-367. Disordered stretches follow at residues 364-400 (ETKSLPSRSPPITPNWRSPRLRHEIRKPRHSSADNLA) and 417-473 (KGPL…PDGV). A Phosphothreonine modification is found at Thr-376. Position 381 is a phosphoserine (Ser-381). The span at 382–393 (PRLRHEIRKPRH) shows a compositional bias: basic residues. The residue at position 425 (Ser-425) is a Phosphoserine. Residues 441-453 (SENNPAQSCLTQK) show a composition bias toward polar residues. Positions 454–470 (SSSSVSPSSNAPGSCSP) are enriched in low complexity. One can recognise a PDZ domain in the interval 510 to 582 (LIRITPDEEG…DQVVMFIKAS (73 aa)). Positions 646-901 (VLIQFEQLYR…KFVCEAILRV (256 aa)) constitute a Tyrosine-protein phosphatase domain. Substrate contacts are provided by residues Asp-811, 842–848 (CSAGIGR), and Gln-886. Residue Cys-842 is the Phosphocysteine intermediate of the active site.

Belongs to the protein-tyrosine phosphatase family. Non-receptor class subfamily.

It is found in the cell membrane. Its subcellular location is the cytoplasm. The protein localises to the cytoskeleton. It catalyses the reaction O-phospho-L-tyrosyl-[protein] + H2O = L-tyrosyl-[protein] + phosphate. Its function is as follows. May act at junctions between the membrane and the cytoskeleton. This is Tyrosine-protein phosphatase non-receptor type 3 (Ptpn3) from Mus musculus (Mouse).